Here is a 139-residue protein sequence, read N- to C-terminus: Small ribosomal subunit protein uS12 (139 aa).

The protein belongs to the universal ribosomal protein uS12 family. Part of the 30S ribosomal subunit. Contacts proteins S8 and S17. May interact with IF1 in the 30S initiation complex.

With S4 and S5 plays an important role in translational accuracy. In terms of biological role, interacts with and stabilizes bases of the 16S rRNA that are involved in tRNA selection in the A site and with the mRNA backbone. Located at the interface of the 30S and 50S subunits, it traverses the body of the 30S subunit contacting proteins on the other side and probably holding the rRNA structure together. The combined cluster of proteins S8, S12 and S17 appears to hold together the shoulder and platform of the 30S subunit. The chain is Small ribosomal subunit protein uS12 from Mycoplasma pneumoniae (strain ATCC 29342 / M129 / Subtype 1) (Mycoplasmoides pneumoniae).